Reading from the N-terminus, the 258-residue chain is Deoxyribose-phosphate aldolase (258 aa).

D102 acts as the Proton donor/acceptor in catalysis. K165 serves as the catalytic Schiff-base intermediate with acetaldehyde. K199 (proton donor/acceptor) is an active-site residue.

Belongs to the DeoC/FbaB aldolase family. DeoC type 2 subfamily.

The protein resides in the cytoplasm. It catalyses the reaction 2-deoxy-D-ribose 5-phosphate = D-glyceraldehyde 3-phosphate + acetaldehyde. Its pathway is carbohydrate degradation; 2-deoxy-D-ribose 1-phosphate degradation; D-glyceraldehyde 3-phosphate and acetaldehyde from 2-deoxy-alpha-D-ribose 1-phosphate: step 2/2. Its function is as follows. Catalyzes a reversible aldol reaction between acetaldehyde and D-glyceraldehyde 3-phosphate to generate 2-deoxy-D-ribose 5-phosphate. The polypeptide is Deoxyribose-phosphate aldolase (Vibrio campbellii (strain ATCC BAA-1116)).